We begin with the raw amino-acid sequence, 659 residues long: Threonine--tRNA ligase (659 aa).

A TGS domain is found at Val7–Thr70. The segment at Asp255–Pro557 is catalytic. Zn(2+)-binding residues include Cys353, His404, and His534.

The protein belongs to the class-II aminoacyl-tRNA synthetase family. As to quaternary structure, homodimer. Zn(2+) is required as a cofactor.

It localises to the cytoplasm. It catalyses the reaction tRNA(Thr) + L-threonine + ATP = L-threonyl-tRNA(Thr) + AMP + diphosphate + H(+). Its function is as follows. Catalyzes the attachment of threonine to tRNA(Thr) in a two-step reaction: L-threonine is first activated by ATP to form Thr-AMP and then transferred to the acceptor end of tRNA(Thr). Also edits incorrectly charged L-seryl-tRNA(Thr). This is Threonine--tRNA ligase from Chlorobium phaeobacteroides (strain BS1).